Here is a 193-residue protein sequence, read N- to C-terminus: Imidazoleglycerol-phosphate dehydratase (193 aa).

It belongs to the imidazoleglycerol-phosphate dehydratase family.

Its subcellular location is the cytoplasm. The catalysed reaction is D-erythro-1-(imidazol-4-yl)glycerol 3-phosphate = 3-(imidazol-4-yl)-2-oxopropyl phosphate + H2O. It participates in amino-acid biosynthesis; L-histidine biosynthesis; L-histidine from 5-phospho-alpha-D-ribose 1-diphosphate: step 6/9. This Saccharolobus islandicus (strain Y.N.15.51 / Yellowstone #2) (Sulfolobus islandicus) protein is Imidazoleglycerol-phosphate dehydratase.